The chain runs to 711 residues: Nuclear intron maturase 1, mitochondrial (711 aa).

Positions 147 to 459 (KDKISMNGGE…RGIQFLDHII (313 aa)) constitute a Reverse transcriptase domain. The segment at 484 to 653 (GTLLSVSASL…QVLQEYIRLQ (170 aa)) is intron maturase type-2.

This sequence belongs to the plant nuclear intron maturase (nMat) family. Expressed at low levels in seedlings and accumulates in adult plants.

It is found in the mitochondrion. Its function is as follows. Nuclear-encoded maturase required for splicing of group-II introns in mitochondria. Necessary for mitochondrial biogenesis during early developmental stages. Involved in the splicing of mitochondrial NAD4 transcripts. Required for trans-splicing of NAD1 intron 1 and also functions in cis-splicing of NAD2 intron 1 and NAD4 intron 2. Required for the regulation of fundamental metabolic pathways such as amino acid metabolism, triacylglycerol degradation and polysaccharide synthesis (cellulose and starch) during the early stage of plant growth. Implicated in stress responses. The chain is Nuclear intron maturase 1, mitochondrial from Arabidopsis thaliana (Mouse-ear cress).